The following is a 145-amino-acid chain: Transcription antitermination protein NusB (145 aa).

It belongs to the NusB family.

Involved in transcription antitermination. Required for transcription of ribosomal RNA (rRNA) genes. Binds specifically to the boxA antiterminator sequence of the ribosomal RNA (rrn) operons. This is Transcription antitermination protein NusB from Geotalea uraniireducens (strain Rf4) (Geobacter uraniireducens).